We begin with the raw amino-acid sequence, 1002 residues long: MWPQPRLPPRPAMSEETRQSKLAAAKKKLREYQQRNSPGVPTGAKKKKKIKNGSNPETTTSGGCHSPEDTPKDNAATLQPSDDTVLPGGVPSPGASLTSMAASQNHDADNVPNLMDETKTFSSTESLRQLSQQLNGLVCESATCVNGEGPASSANLKDLESRYQQLAVALDSSYVTNKQLNITIEKLKQQNQEITDQLEEEKKECHQKQGALREQLQVHIQTIGILVSEKAELQTALAHTQHAARQKEGESEDLASRLQYSRRRVGELERALSAVSTQQKKADRYNKELTKERDALRLELYKNTQSNEDLKQEKSELEEKLRVLVTEKAGMQLNLEELQKKLEMTELLLQQFSSRCEAPDANQQLQQAMEERAQLEAHLGQVMESVRQLQMERDKYAENLKGESAMWRQRMQQMSEQVHTLREEKECSMSRVQELETSLAELRNQMAEPPPPEPPAGPSEVEQQLQAEAEHLRKELEGLAGQLQAQVQDNEGLSRLNREQEERLLELERAAELWGEQAEARRQILETMQNDRTTISRALSQNRELKEQLAELQSGFVKLTNENMEITSALQSEQHVKRELGKKLGELQEKLSELKETVELKSQEAQSLQQQRDQYLGHLQQYVAAYQQLTSEKEVLHNQLLLQTQLVDQLQQQEAQGKAVAEMARQELQETQERLEAATQQNQQLRAQLSLMAHPGEGDGLDREEEEDEEEEEEEAVAVPQPMPSIPEDLESREAMVAFFNSAVASAEEEQARLRGQLKEQRVRCRRLAHLLASAQKEPEAAAPAPGTGGDSVCGETHRALQGAMEKLQSRFMELMQEKADLKERVEELEHRCIQLSGETDTIGEYIALYQSQRAVLKERHREKEEYISRLAQDKEEMKVKLLELQELVLRLVGDRNEWHGRFLAAAQNPADEPTSGAPAPQELGAANQQGDLCEVSLAGSVEPAQGEAREGSPRDNPTAQQIMQLLREMQNPRERPGLGSNPCIPFFYRADENDEVKITVI.

Pro residues predominate over residues 1-11 (MWPQPRLPPRP). An interaction with p115/USO1 region spans residues 1 to 84 (MWPQPRLPPR…AATLQPSDDT (84 aa)). The tract at residues 1–107 (MWPQPRLPPR…TSMAASQNHD (107 aa)) is disordered. A coiled-coil region spans residues 16-892 (ETRQSKLAAA…LELQELVLRL (877 aa)). Dimethylated arginine occurs at positions 18, 30, and 35. Positions 26 to 49 (KKKLREYQQRNSPGVPTGAKKKKK) match the Nuclear localization signal motif. A Phosphoserine modification is found at serine 37. Over residues 52 to 63 (NGSNPETTTSGG) the composition is skewed to polar residues. Serine 66 carries the phosphoserine modification. Positions 95-105 (ASLTSMAASQN) are enriched in polar residues. 3 positions are modified to phosphoserine: serine 273, serine 438, and serine 690. Positions 694-724 (HPGEGDGLDREEEEDEEEEEEEAVAVPQPMP) are disordered. Positions 702-716 (DREEEEDEEEEEEEA) are enriched in acidic residues. Serine 937, serine 953, and serine 981 each carry phosphoserine. The interval 992-1002 (DENDEVKITVI) is interaction with GORASP1/GRASP65.

This sequence belongs to the GOLGA2 family. In terms of assembly, homodimer, may assemble into homohexamers. Homotetramer; forms a parallel homotetramer with a flexible rod-like structure that can give rise to I- and Y-shaped conformations. Interacts with GORASP1/GRASP65. The homooligomer forms a complex with GORASP1 with a 1:1 stoichiometry. Interacts with RAB1B that has been activated by GTP-binding. Interacts with p115/USO1; interaction with p115/USO1 inhibits interaction with STX5 and/or RAB1B. Interacts with STX5. Interacts with ZFPL1. Interacts with AKAP450/AKAP9; leading to recruit AKAP450/AKAP9 to the cis-Golgi. In terms of processing, cleaved by caspases at the onset of apoptosis. Methylation by PRMT5 is required for Golgi ribbon formation. While dimethylation at Arg-30 and Arg-35 are confirmed in vivo, it is unclear whether Arg-18 is methylated in vivo. Post-translationally, phosphorylated at Ser-37 by CDK1 at the onset of mitosis, inhibiting the interaction with p115/USO1 and triggering Golgi disassembly. Phosphorylated at Ser-37 in prophase as the Golgi complex starts to break down, and remains phosphorylated during further breakdown and partitioning of the Golgi fragments in metaphase and anaphase. In telophase, GM130 is dephosphorylated by PP2A as the Golgi fragments start to reassemble.

The protein localises to the golgi apparatus. It is found in the cis-Golgi network membrane. Its subcellular location is the endoplasmic reticulum-Golgi intermediate compartment membrane. The protein resides in the cytoplasm. It localises to the cytoskeleton. The protein localises to the spindle pole. Peripheral membrane component of the cis-Golgi stack that acts as a membrane skeleton that maintains the structure of the Golgi apparatus, and as a vesicle thether that facilitates vesicle fusion to the Golgi membrane. Required for normal protein transport from the endoplasmic reticulum to the Golgi apparatus and the cell membrane. Together with p115/USO1 and STX5, involved in vesicle tethering and fusion at the cis-Golgi membrane to maintain the stacked and inter-connected structure of the Golgi apparatus. Plays a central role in mitotic Golgi disassembly: phosphorylation at Ser-37 by CDK1 at the onset of mitosis inhibits the interaction with p115/USO1, preventing tethering of COPI vesicles and thereby inhibiting transport through the Golgi apparatus during mitosis. Also plays a key role in spindle pole assembly and centrosome organization. Promotes the mitotic spindle pole assembly by activating the spindle assembly factor TPX2 to nucleate microtubules around the Golgi and capture them to couple mitotic membranes to the spindle: upon phosphorylation at the onset of mitosis, GOLGA2 interacts with importin-alpha via the nuclear localization signal region, leading to recruit importin-alpha to the Golgi membranes and liberate the spindle assembly factor TPX2 from importin-alpha. TPX2 then activates AURKA kinase and stimulates local microtubule nucleation. Upon filament assembly, nascent microtubules are further captured by GOLGA2, thus linking Golgi membranes to the spindle. Regulates the meiotic spindle pole assembly, probably via the same mechanism. Also regulates the centrosome organization. Also required for the Golgi ribbon formation and glycosylation of membrane and secretory proteins. The protein is Golgin subfamily A member 2 (GOLGA2) of Homo sapiens (Human).